The following is a 130-amino-acid chain: Small ribosomal subunit protein uS9 (130 aa).

Positions 105 to 130 (TRDSRMVERKKPGLKKARRASQFSKR) are disordered. Over residues 106-115 (RDSRMVERKK) the composition is skewed to basic and acidic residues. Over residues 116 to 130 (PGLKKARRASQFSKR) the composition is skewed to basic residues.

This sequence belongs to the universal ribosomal protein uS9 family.

This is Small ribosomal subunit protein uS9 from Oenococcus oeni (strain ATCC BAA-331 / PSU-1).